The primary structure comprises 127 residues: Large ribosomal subunit protein bL12 (127 aa).

This sequence belongs to the bacterial ribosomal protein bL12 family. Homodimer. Part of the ribosomal stalk of the 50S ribosomal subunit. Forms a multimeric L10(L12)X complex, where L10 forms an elongated spine to which 2 to 4 L12 dimers bind in a sequential fashion. Binds GTP-bound translation factors.

Its function is as follows. Forms part of the ribosomal stalk which helps the ribosome interact with GTP-bound translation factors. Is thus essential for accurate translation. This is Large ribosomal subunit protein bL12 from Acidiphilium cryptum (strain JF-5).